Reading from the N-terminus, the 96-residue chain is Large ribosomal subunit protein bL28 (96 aa).

Positions 1–21 are disordered; that stretch reads MSRVCELTGKGPMTGNNVSHA.

This sequence belongs to the bacterial ribosomal protein bL28 family.

The sequence is that of Large ribosomal subunit protein bL28 from Jannaschia sp. (strain CCS1).